A 171-amino-acid chain; its full sequence is Flavodoxin (171 aa).

In terms of domain architecture, Flavodoxin-like spans 4 to 166 (IGLFVGTTTG…RIKEWVKQLK (163 aa)).

This sequence belongs to the flavodoxin family. Requires FMN as cofactor.

Functionally, low-potential electron donor to a number of redox enzymes. The chain is Flavodoxin (fld) from Trichodesmium erythraeum (strain IMS101).